A 233-amino-acid polypeptide reads, in one-letter code: Large ribosomal subunit protein uL1 (233 aa).

Belongs to the universal ribosomal protein uL1 family. Part of the 50S ribosomal subunit.

Functionally, binds directly to 23S rRNA. The L1 stalk is quite mobile in the ribosome, and is involved in E site tRNA release. Its function is as follows. Protein L1 is also a translational repressor protein, it controls the translation of the L11 operon by binding to its mRNA. The polypeptide is Large ribosomal subunit protein uL1 (Vibrio cholerae serotype O1 (strain ATCC 39315 / El Tor Inaba N16961)).